Consider the following 410-residue polypeptide: MRALTNLSQIATGEGRSFLSGERQADVKVYENHSILIHGGRIAEITRAVPPGVEEIDCGGGVAVPGFVDPHTHIAFAGNRVQEFYMRIRGTSYLDILRSGNGIYRTIRDTVNADENRIFKETISRVWSAVRRGTTTMEMKTGYGLDQRGEEKILSAIEVIKNTGPISVVPTYLAHVVPQDVQENAYVEGILETVKRNRQRISYADIFCDAGAFSPEASRRFLEAAIAMGIPARIHTNEIENVGCVKKTRGLPIVSYDHMIHFDDADLDIVKENGSSVTLLPITVFALNEAYPDARRIIDRGIPVSIATDISPLNMNDDMIFAMHLAVRNNHMNAEEVLNAATINPAASLGLAEKKGTIESGKDADLVVLSARSYDEIPYLYGLDIVSMTISRGNILYSRGDHGITDTSEA.

Residues H71 and H73 each contribute to the Fe(3+) site. Residues H71 and H73 each contribute to the Zn(2+) site. 4-imidazolone-5-propanoate-binding residues include R80, Y143, and H175. Y143 lines the N-formimidoyl-L-glutamate pocket. Position 235 (H235) interacts with Fe(3+). Position 235 (H235) interacts with Zn(2+). E238 is a 4-imidazolone-5-propanoate binding site. D309 is a Fe(3+) binding site. D309 serves as a coordination point for Zn(2+).

This sequence belongs to the metallo-dependent hydrolases superfamily. HutI family. The cofactor is Zn(2+). Requires Fe(3+) as cofactor.

It is found in the cytoplasm. The enzyme catalyses 4-imidazolone-5-propanoate + H2O = N-formimidoyl-L-glutamate. The protein operates within amino-acid degradation; L-histidine degradation into L-glutamate; N-formimidoyl-L-glutamate from L-histidine: step 3/3. In terms of biological role, catalyzes the hydrolytic cleavage of the carbon-nitrogen bond in imidazolone-5-propanoate to yield N-formimidoyl-L-glutamate. It is the third step in the universal histidine degradation pathway. This Thermoplasma acidophilum (strain ATCC 25905 / DSM 1728 / JCM 9062 / NBRC 15155 / AMRC-C165) protein is Imidazolonepropionase.